The primary structure comprises 250 residues: Ribonuclease PH (250 aa).

Phosphate is bound by residues Arg-87 and 125–127 (GTR).

The protein belongs to the RNase PH family. Homohexameric ring arranged as a trimer of dimers.

It catalyses the reaction tRNA(n+1) + phosphate = tRNA(n) + a ribonucleoside 5'-diphosphate. Its function is as follows. Phosphorolytic 3'-5' exoribonuclease that plays an important role in tRNA 3'-end maturation. Removes nucleotide residues following the 3'-CCA terminus of tRNAs; can also add nucleotides to the ends of RNA molecules by using nucleoside diphosphates as substrates, but this may not be physiologically important. Probably plays a role in initiation of 16S rRNA degradation (leading to ribosome degradation) during starvation. The polypeptide is Ribonuclease PH (Moorella thermoacetica (strain ATCC 39073 / JCM 9320)).